A 275-amino-acid chain; its full sequence is NH(3)-dependent NAD(+) synthetase (275 aa).

ATP is bound at residue 46–53 (GISGGQDS). Asp52 serves as a coordination point for Mg(2+). Arg140 lines the deamido-NAD(+) pocket. Thr160 provides a ligand contact to ATP. Glu165 serves as a coordination point for Mg(2+). Deamido-NAD(+) contacts are provided by Lys173 and Asp180. Residues Lys189 and Thr211 each contribute to the ATP site. 260–261 (HK) serves as a coordination point for deamido-NAD(+).

This sequence belongs to the NAD synthetase family. In terms of assembly, homodimer.

The enzyme catalyses deamido-NAD(+) + NH4(+) + ATP = AMP + diphosphate + NAD(+) + H(+). The protein operates within cofactor biosynthesis; NAD(+) biosynthesis; NAD(+) from deamido-NAD(+) (ammonia route): step 1/1. Its function is as follows. Catalyzes the ATP-dependent amidation of deamido-NAD to form NAD. Uses ammonia as a nitrogen source. The protein is NH(3)-dependent NAD(+) synthetase of Escherichia coli (strain K12 / MC4100 / BW2952).